The primary structure comprises 103 residues: MERIRLKLKAYDHRVLDRTVAAIVEAVKRTGADIRGPIPMPTKIKRYTVLKSPHINKDSREQFEIRIHARMLDIVAATPDTVDSLTKLDLAPEVSVEVRAMGK.

This sequence belongs to the universal ribosomal protein uS10 family. As to quaternary structure, part of the 30S ribosomal subunit.

Involved in the binding of tRNA to the ribosomes. The protein is Small ribosomal subunit protein uS10 of Campylobacter jejuni subsp. jejuni serotype O:6 (strain 81116 / NCTC 11828).